Consider the following 295-residue polypeptide: 4-diphosphocytidyl-2-C-methyl-D-erythritol kinase (295 aa).

The active site involves Lys-10. 97-107 (PIGSGLGGASS) contributes to the ATP binding site. Asp-139 is an active-site residue.

It belongs to the GHMP kinase family. IspE subfamily. As to quaternary structure, homodimer.

The enzyme catalyses 4-CDP-2-C-methyl-D-erythritol + ATP = 4-CDP-2-C-methyl-D-erythritol 2-phosphate + ADP + H(+). Its pathway is isoprenoid biosynthesis; isopentenyl diphosphate biosynthesis via DXP pathway; isopentenyl diphosphate from 1-deoxy-D-xylulose 5-phosphate: step 3/6. In terms of biological role, catalyzes the phosphorylation of the position 2 hydroxy group of 4-diphosphocytidyl-2C-methyl-D-erythritol. The chain is 4-diphosphocytidyl-2-C-methyl-D-erythritol kinase from Blochmanniella pennsylvanica (strain BPEN).